We begin with the raw amino-acid sequence, 136 residues long: MLQPKRTKFRKVHKGRNRGIAAGTDVSFGTYGLKAIGRGRLTARQIEAARRAMTRAVKRQGKIWIRVFPDKPITEKPLEVRMGKGKGNVEYWVALIQPGKVLYEMDGVSEEIAREAFALAAAKLPIKTTFVTKTVM.

Belongs to the universal ribosomal protein uL16 family. As to quaternary structure, part of the 50S ribosomal subunit.

Binds 23S rRNA and is also seen to make contacts with the A and possibly P site tRNAs. The polypeptide is Large ribosomal subunit protein uL16 (Mannheimia succiniciproducens (strain KCTC 0769BP / MBEL55E)).